Consider the following 431-residue polypeptide: Enolase (431 aa).

(2R)-2-phosphoglycerate is bound at residue Gln163. Glu205 serves as the catalytic Proton donor. 3 residues coordinate Mg(2+): Asp242, Glu288, and Asp315. Residues Lys340, Arg369, Ser370, and Lys391 each coordinate (2R)-2-phosphoglycerate. The Proton acceptor role is filled by Lys340.

It belongs to the enolase family. The cofactor is Mg(2+).

Its subcellular location is the cytoplasm. The protein resides in the secreted. The protein localises to the cell surface. The catalysed reaction is (2R)-2-phosphoglycerate = phosphoenolpyruvate + H2O. Its pathway is carbohydrate degradation; glycolysis; pyruvate from D-glyceraldehyde 3-phosphate: step 4/5. In terms of biological role, catalyzes the reversible conversion of 2-phosphoglycerate (2-PG) into phosphoenolpyruvate (PEP). It is essential for the degradation of carbohydrates via glycolysis. This chain is Enolase, found in Bacillus cereus (strain G9842).